The chain runs to 86 residues: RNA-binding protein Hfq (86 aa).

Positions 9–68 (DIFLNVLRRERIQVSIYLFNGIKLQGHIESFDQFVIVLKNTISQMVYKHAVSTIVPSKFV) constitute a Sm domain.

It belongs to the Hfq family. As to quaternary structure, homohexamer.

Functionally, RNA chaperone that binds small regulatory RNA (sRNAs) and mRNAs to facilitate mRNA translational regulation in response to envelope stress, environmental stress and changes in metabolite concentrations. Also binds with high specificity to tRNAs. The sequence is that of RNA-binding protein Hfq from Baumannia cicadellinicola subsp. Homalodisca coagulata.